The primary structure comprises 141 residues: Large ribosomal subunit protein uL11 (141 aa).

Belongs to the universal ribosomal protein uL11 family. As to quaternary structure, part of the ribosomal stalk of the 50S ribosomal subunit. Interacts with L10 and the large rRNA to form the base of the stalk. L10 forms an elongated spine to which L12 dimers bind in a sequential fashion forming a multimeric L10(L12)X complex. In terms of processing, one or more lysine residues are methylated.

Its function is as follows. Forms part of the ribosomal stalk which helps the ribosome interact with GTP-bound translation factors. This is Large ribosomal subunit protein uL11 from Chlorobaculum tepidum (strain ATCC 49652 / DSM 12025 / NBRC 103806 / TLS) (Chlorobium tepidum).